The sequence spans 407 residues: Peptidase T (407 aa).

Zn(2+) is bound at residue His-82. Asp-84 is an active-site residue. A Zn(2+)-binding site is contributed by Asp-143. Residue Glu-177 is the Proton acceptor of the active site. The Zn(2+) site is built by Glu-178, Asp-200, and His-382.

This sequence belongs to the peptidase M20B family. The cofactor is Zn(2+).

It localises to the cytoplasm. The enzyme catalyses Release of the N-terminal residue from a tripeptide.. Cleaves the N-terminal amino acid of tripeptides. The polypeptide is Peptidase T (Streptococcus pyogenes serotype M12 (strain MGAS2096)).